The sequence spans 204 residues: MFKKIAADALGLSDIGKIIEPQDYDKTDADDYVMHEDNEKIYFLIKTKADEYCFTNLALIHVDGERATSSKRTLKRYPYSQYKISDVFLETAGKVDLDVEIKFKLGGEQFDIDVHKDQIEKLKDLYKALLRIAETTYENDILINQAEQSLDKAVTILHHTRPEHVNIETQYKELTEFGFTWLTSVRSQYHIKDFGDVFEKYINN.

A coiled-coil region spans residues 109–136 (QFDIDVHKDQIEKLKDLYKALLRIAETT).

This is an uncharacterized protein from Bacillus subtilis (strain 168).